A 1186-amino-acid chain; its full sequence is Sericin 1 (1186 aa).

Positions 1 to 21 (MRFVLCCTLIALAALSVKAFG) are cleaved as a signal peptide. Polar residues-rich tracts occupy residues 39-48 (AASSESSYLN) and 104-115 (NGGSASAGQSRD). 3 disordered regions span residues 39–119 (AASS…SSLR), 131–494 (AVAA…EDSS), and 518–1157 (GGAT…VNRL). A compositionally biased stretch (low complexity) spans 145-155 (AQQNAQANWNA). Basic and acidic residues predominate over residues 180–198 (SDKDITAASKDDSRADSSR). The segment covering 211-224 (SESAGLSDRSASSS) has biased composition (low complexity). Residues 256–275 (YYNSSPDGSYNAGTRDSSIS) show a composition bias toward polar residues. Positions 286–299 (ADKDQIRAANDRSS) are enriched in basic and acidic residues. The span at 300 to 312 (SKQLKQSSAQISS) shows a compositional bias: low complexity. Over residues 321–334 (SKDRQYSNDKRSKS) the composition is skewed to basic and acidic residues. Composition is skewed to polar residues over residues 356 to 380 (RQSNTNYADQNSVRSDSAASDQTSK), 393 to 409 (AHSSGSRGSQNQKSSSY), and 416 to 445 (FSSSTNTEKSKFSSSNSVVETSDGASASRE). 6 stretches are compositionally biased toward low complexity: residues 465–491 (ASQSSSSRSSQESASYSSSSSSSTLSE), 518–537 (GGATKSGASSSTQATTVSGA), 553–698 (SSSS…YGYS), 705–1004 (RVSS…YSSS), 1015–1075 (SSSN…ASSE), and 1097–1145 (SSTT…TSSS). Tandem repeats lie at residues 593-630 (SSTGSTSNTDSSSKSAGSRTSGGSSTYGYSSSHRGGSV), 631-668 (SSTGSSSNTDSSTKNAGSSTSGGSSTYGYSSSHRGGSV), 669-706 (SSTGSSSNTDSSTKSAGSSTSGGSSTYGYSSRHRGGRV), 707-744 (SSTGSSSTTDASSNSVGSSTSGGSSTYGYSSNSRDGSV), 745-782 (SSTGSSSNTDSNSNSAGSSTSGGSSTYGYSSNSRDGSV), 783-820 (SSTGSSSNTDSNSNSAGSSTSGGSSTYGYSSNSRDGSV), 821-858 (SSTGSSSNTDASTDLTGSSTSGGSSTYGYSSDSRDGSV), 859-896 (SSTGSSSNTDASTDLAGSSTSGGSSTYGYSSDCGDGSV), 897-934 (SSTGSSSNTDASTDLAGSSTSGGSSTYGYSSDSRDGSV), 935-972 (SSTGSSSNTDASTDLAGSSTSGGSSTYGYSSNSRDGSV), and 973-1010 (SSTGSSSNTDASTDLTGSSTSGGSSTYGYSSSNRDGSV). Positions 1148 to 1157 (RSHHSGVNRL) are enriched in basic residues.

Produced exclusively in the middle (MSG) section of silk glands.

It localises to the secreted. Provides the silk fibroin thread with a sticky coating. Acts as a cement by sticking silk threads together. The sequence is that of Sericin 1 (ser1) from Bombyx mori (Silk moth).